The sequence spans 82 residues: MSDKIRTLQGRVTSNKMDKSITVAIERQVKHPIYGKYIKRTTKIHAHDETNQCNEGDLVAIRECRPLSKTKSWTLVEVVSKA.

The protein belongs to the universal ribosomal protein uS17 family. Part of the 30S ribosomal subunit.

Functionally, one of the primary rRNA binding proteins, it binds specifically to the 5'-end of 16S ribosomal RNA. In Shewanella sp. (strain W3-18-1), this protein is Small ribosomal subunit protein uS17.